Reading from the N-terminus, the 251-residue chain is Cyclohexanol dehydrogenase (251 aa).

Residues aspartate 42, asparagine 95, tyrosine 161, lysine 165, isoleucine 194, and threonine 196 each coordinate NAD(+). The active-site Proton acceptor is tyrosine 161.

It belongs to the short-chain dehydrogenases/reductases (SDR) family.

The enzyme catalyses cyclohexanol + NAD(+) = cyclohexanone + NADH + H(+). Functionally, catalyzes the oxidation of cyclohexanol to cyclohexanone. Required for the conversion of cyclohexanol to adipic acid. This chain is Cyclohexanol dehydrogenase, found in Acinetobacter sp. (strain SE19).